A 159-amino-acid polypeptide reads, in one-letter code: Adult-specific rigid cuticular protein 15.7 (159 aa).

One can recognise a Chitin-binding type R&amp;R domain in the interval 23 to 89; the sequence is LGNYAFNYGI…SIKTNEPGTA (67 aa).

Its function is as follows. Component of the rigid cuticle of the spider. This is Adult-specific rigid cuticular protein 15.7 from Araneus diadematus (European garden spider).